The primary structure comprises 291 residues: Ribosomal RNA small subunit methyltransferase A (291 aa).

S-adenosyl-L-methionine contacts are provided by Asn-28, Leu-30, Gly-55, Glu-77, Asp-103, and Asn-123.

The protein belongs to the class I-like SAM-binding methyltransferase superfamily. rRNA adenine N(6)-methyltransferase family. RsmA subfamily.

The protein resides in the cytoplasm. It catalyses the reaction adenosine(1518)/adenosine(1519) in 16S rRNA + 4 S-adenosyl-L-methionine = N(6)-dimethyladenosine(1518)/N(6)-dimethyladenosine(1519) in 16S rRNA + 4 S-adenosyl-L-homocysteine + 4 H(+). Its function is as follows. Specifically dimethylates two adjacent adenosines (A1518 and A1519) in the loop of a conserved hairpin near the 3'-end of 16S rRNA in the 30S particle. May play a critical role in biogenesis of 30S subunits. In Azorhizobium caulinodans (strain ATCC 43989 / DSM 5975 / JCM 20966 / LMG 6465 / NBRC 14845 / NCIMB 13405 / ORS 571), this protein is Ribosomal RNA small subunit methyltransferase A.